The sequence spans 286 residues: Bifunctional protein FolD (286 aa).

Residues 164 to 166 (GRS), S193, and I234 each bind NADP(+).

The protein belongs to the tetrahydrofolate dehydrogenase/cyclohydrolase family. In terms of assembly, homodimer.

The enzyme catalyses (6R)-5,10-methylene-5,6,7,8-tetrahydrofolate + NADP(+) = (6R)-5,10-methenyltetrahydrofolate + NADPH. It catalyses the reaction (6R)-5,10-methenyltetrahydrofolate + H2O = (6R)-10-formyltetrahydrofolate + H(+). The protein operates within one-carbon metabolism; tetrahydrofolate interconversion. Its function is as follows. Catalyzes the oxidation of 5,10-methylenetetrahydrofolate to 5,10-methenyltetrahydrofolate and then the hydrolysis of 5,10-methenyltetrahydrofolate to 10-formyltetrahydrofolate. This Oleidesulfovibrio alaskensis (strain ATCC BAA-1058 / DSM 17464 / G20) (Desulfovibrio alaskensis) protein is Bifunctional protein FolD.